A 72-amino-acid polypeptide reads, in one-letter code: Probable transcription factor elt-4 (72 aa).

The GATA-type zinc-finger motif lies at 16–40 (CSNCNGTNTTLWRRKAEGDPVCNAC).

Its subcellular location is the nucleus. Probable transcription factor. Plays a role in regulating heme-dependent expression of heme transporter hrg-1. Modulates lifespan in a daf-16-dependent manner. This is Probable transcription factor elt-4 from Caenorhabditis elegans.